The following is a 427-amino-acid chain: Glutamate-1-semialdehyde 2,1-aminomutase 1 (427 aa).

Lys265 is subject to N6-(pyridoxal phosphate)lysine.

Belongs to the class-III pyridoxal-phosphate-dependent aminotransferase family. HemL subfamily. Homodimer. The cofactor is pyridoxal 5'-phosphate.

It is found in the cytoplasm. The catalysed reaction is (S)-4-amino-5-oxopentanoate = 5-aminolevulinate. The protein operates within porphyrin-containing compound metabolism; protoporphyrin-IX biosynthesis; 5-aminolevulinate from L-glutamyl-tRNA(Glu): step 2/2. The sequence is that of Glutamate-1-semialdehyde 2,1-aminomutase 1 from Lachnoclostridium phytofermentans (strain ATCC 700394 / DSM 18823 / ISDg) (Clostridium phytofermentans).